Reading from the N-terminus, the 80-residue chain is Cytochrome c oxidase subunit 7B, mitochondrial (80 aa).

The N-terminal 24 residues, 1-24 (MFPLVKNALNRLQVRSIQQTMARQ), are a transit peptide targeting the mitochondrion. Topologically, residues 25–32 (SHQKRTPD) are mitochondrial matrix. A helical membrane pass occupies residues 33–59 (FHDKYGNAVLASGATFCIVTWTYVATQ). Residues 60–80 (VGIEWNLSPVGRVTPKEWRNQ) are Mitochondrial intermembrane-facing.

This sequence belongs to the cytochrome c oxidase VIIb family. Component of the cytochrome c oxidase (complex IV, CIV), a multisubunit enzyme composed of 14 subunits. The complex is composed of a catalytic core of 3 subunits MT-CO1, MT-CO2 and MT-CO3, encoded in the mitochondrial DNA, and 11 supernumerary subunits COX4I, COX5A, COX5B, COX6A, COX6B, COX6C, COX7A, COX7B, COX7C, COX8 and NDUFA4, which are encoded in the nuclear genome. The complex exists as a monomer or a dimer and forms supercomplexes (SCs) in the inner mitochondrial membrane with NADH-ubiquinone oxidoreductase (complex I, CI) and ubiquinol-cytochrome c oxidoreductase (cytochrome b-c1 complex, complex III, CIII), resulting in different assemblies (supercomplex SCI(1)III(2)IV(1) and megacomplex MCI(2)III(2)IV(2)).

The protein localises to the mitochondrion inner membrane. It participates in energy metabolism; oxidative phosphorylation. Functionally, component of the cytochrome c oxidase, the last enzyme in the mitochondrial electron transport chain which drives oxidative phosphorylation. The respiratory chain contains 3 multisubunit complexes succinate dehydrogenase (complex II, CII), ubiquinol-cytochrome c oxidoreductase (cytochrome b-c1 complex, complex III, CIII) and cytochrome c oxidase (complex IV, CIV), that cooperate to transfer electrons derived from NADH and succinate to molecular oxygen, creating an electrochemical gradient over the inner membrane that drives transmembrane transport and the ATP synthase. Cytochrome c oxidase is the component of the respiratory chain that catalyzes the reduction of oxygen to water. Electrons originating from reduced cytochrome c in the intermembrane space (IMS) are transferred via the dinuclear copper A center (CU(A)) of subunit 2 and heme A of subunit 1 to the active site in subunit 1, a binuclear center (BNC) formed by heme A3 and copper B (CU(B)). The BNC reduces molecular oxygen to 2 water molecules using 4 electrons from cytochrome c in the IMS and 4 protons from the mitochondrial matrix. Plays a role in proper central nervous system (CNS) development in vertebrates. This Pongo abelii (Sumatran orangutan) protein is Cytochrome c oxidase subunit 7B, mitochondrial (COX7B).